We begin with the raw amino-acid sequence, 64 residues long: uncharacterized protein (64 aa).

This is an uncharacterized protein from Sulfolobus islandicus filamentous virus (isolate Iceland/Hveragerdi) (SIFV).